Consider the following 313-residue polypeptide: MNSSTFEVLWGVNNIYSVVEVNTNTVYEGVIKGKFLNTREKEYSPLVPGDFVCGDIYDEHKVYIKERMERRNVFWRYNKKVALRQVIVSNIDNILIVSSATLPEFKNSFIDRTLIVAEEQGITPIILVNKVDEGINLRVDSFIKIYEYLGYRVIKTSVVTLQGIDEVKKIIKNSRTSFIGQSGVGKSSLINVIDLNASQAINEISYKYARGRHTTVYAVAFHSDNKILIDTPGIKEFGIEGLGYLELKYYFKEFKYFNDLCRFNSCLHINEPNCFVISQIGFKIAEARYNSYLKIFSELKRYKSYAREIFGKN.

One can recognise a CP-type G domain in the interval 80 to 237 (KVALRQVIVS…LIDTPGIKEF (158 aa)). Residues 129–132 (NKVD) and 180–188 (GQSGVGKSS) each bind GTP. Residues cysteine 261, cysteine 266, histidine 268, and cysteine 274 each contribute to the Zn(2+) site.

The protein belongs to the TRAFAC class YlqF/YawG GTPase family. RsgA subfamily. Monomer. Associates with 30S ribosomal subunit, binds 16S rRNA. Zn(2+) is required as a cofactor.

It is found in the cytoplasm. Functionally, one of several proteins that assist in the late maturation steps of the functional core of the 30S ribosomal subunit. Helps release RbfA from mature subunits. May play a role in the assembly of ribosomal proteins into the subunit. Circularly permuted GTPase that catalyzes slow GTP hydrolysis, GTPase activity is stimulated by the 30S ribosomal subunit. This is Small ribosomal subunit biogenesis GTPase RsgA from Borrelia recurrentis (strain A1).